Consider the following 502-residue polypeptide: ATP synthase subunit alpha (502 aa).

169 to 176 provides a ligand contact to ATP; sequence GDRQTGKT.

The protein belongs to the ATPase alpha/beta chains family. F-type ATPases have 2 components, CF(1) - the catalytic core - and CF(0) - the membrane proton channel. CF(1) has five subunits: alpha(3), beta(3), gamma(1), delta(1), epsilon(1). CF(0) has three main subunits: a(1), b(2) and c(9-12). The alpha and beta chains form an alternating ring which encloses part of the gamma chain. CF(1) is attached to CF(0) by a central stalk formed by the gamma and epsilon chains, while a peripheral stalk is formed by the delta and b chains.

The protein resides in the cell membrane. The catalysed reaction is ATP + H2O + 4 H(+)(in) = ADP + phosphate + 5 H(+)(out). Produces ATP from ADP in the presence of a proton gradient across the membrane. The alpha chain is a regulatory subunit. This Exiguobacterium sibiricum (strain DSM 17290 / CCUG 55495 / CIP 109462 / JCM 13490 / 255-15) protein is ATP synthase subunit alpha.